Consider the following 122-residue polypeptide: Large ribosomal subunit protein uL14 (122 aa).

The protein belongs to the universal ribosomal protein uL14 family. As to quaternary structure, part of the 50S ribosomal subunit. Forms a cluster with proteins L3 and L19. In the 70S ribosome, L14 and L19 interact and together make contacts with the 16S rRNA in bridges B5 and B8.

Its function is as follows. Binds to 23S rRNA. Forms part of two intersubunit bridges in the 70S ribosome. The chain is Large ribosomal subunit protein uL14 from Nitrosomonas europaea (strain ATCC 19718 / CIP 103999 / KCTC 2705 / NBRC 14298).